Consider the following 280-residue polypeptide: MKYFEFTFHTSPCTETVNDVLAAVLGEAGFESFVESEGGLTAYIQQALCDENTIKNAITEFPLPDTEITYTYVEAEDKDWNEEWEKNFFQPIVIDNRCVIHSTFHKDVPQATYDIVINPQMAFGTGHHETTSLIIGELLDNELKDKSLLDMGCGTSILAILARMRGARPCIAIDIDEWCVRNSIENIELNHVDDIAVSQGDASSLVGKGPFDIIIANINRNILLNDMKQYVACMHPGSELYMSGFYVDDIPFIRREAEKNGLTFVHHKEKNRWAAVKFTY.

Positions 131, 152, 174, and 217 each coordinate S-adenosyl-L-methionine.

The protein belongs to the methyltransferase superfamily. PrmA family.

Its subcellular location is the cytoplasm. It carries out the reaction L-lysyl-[protein] + 3 S-adenosyl-L-methionine = N(6),N(6),N(6)-trimethyl-L-lysyl-[protein] + 3 S-adenosyl-L-homocysteine + 3 H(+). Functionally, methylates ribosomal protein L11. In Bacteroides thetaiotaomicron (strain ATCC 29148 / DSM 2079 / JCM 5827 / CCUG 10774 / NCTC 10582 / VPI-5482 / E50), this protein is Ribosomal protein L11 methyltransferase.